Reading from the N-terminus, the 284-residue chain is Hydrogenase expression/formation protein HupQ (284 aa).

The interval 1–23 (MIGTQSILPPGFGPGSHGEEDRL) is disordered.

Belongs to the HupH/HyaF family.

This Azotobacter chroococcum mcd 1 protein is Hydrogenase expression/formation protein HupQ (hupQ).